The primary structure comprises 396 residues: Adenosine 3'-phospho 5'-phosphosulfate transporter 2 (396 aa).

Residues 22–42 (NGGESAGNSPPSQRKSSTSES) are disordered. Positions 27 to 42 (AGNSPPSQRKSSTSES) are enriched in polar residues. Phosphoserine occurs at positions 37 and 40. A glycan (N-linked (GlcNAc...) asparagine) is linked at Asn57. 10 helical membrane passes run 66 to 86 (CAGV…IFTV), 91 to 111 (PYGW…GLVE), 140 to 160 (LILA…LGYL), 163 to 183 (PTQV…SILI), 189 to 209 (GLLD…FTLA), 216 to 236 (NFNL…AAIG), 253 to 273 (VVFY…LVTG), 290 to 310 (FGYG…VLAL), 318 to 338 (IAAT…FVLF), and 342 to 362 (FTLQ…LNVY).

This sequence belongs to the nucleotide-sugar transporter family. SLC35B subfamily.

It is found in the golgi apparatus membrane. Its function is as follows. Mediates the transport of adenosine 3'-phospho 5'-phosphosulfate (PAPS), from cytosol into Golgi. PAPS is a universal sulfuryl donor for sulfation events that take place in the Golgi. Essential for viability. Involved in glycosaminoglycan synthesis and the subsequent signaling. May be involved in hh and dpp signaling by controlling the sulfation of heparan sulfate (HS). This Drosophila melanogaster (Fruit fly) protein is Adenosine 3'-phospho 5'-phosphosulfate transporter 2 (Papst2).